A 491-amino-acid chain; its full sequence is HEPACAM family member 2 (491 aa).

A signal peptide spans 1-18 (MWLRVFTAFLSFTAGACS). N-linked (GlcNAc...) asparagine glycans are attached at residues asparagine 73, asparagine 117, and asparagine 153. 2 Ig-like C2-type domains span residues 137–221 (PVVQ…SDII) and 223–319 (PTIY…THFT). Cystine bridges form between cysteine 158-cysteine 207 and cysteine 258-cysteine 303. N-linked (GlcNAc...) asparagine glycosylation is present at asparagine 308. The helical transmembrane segment at 340 to 360 (LASITGISLFLIISMCLLFLW) threads the bilayer. Residues 361–491 (KKFQPYKVIK…GKHSRAKQCI (131 aa)) lie on the Cytoplasmic side of the membrane. Over residues 444-454 (QQQDHPESSSQ) the composition is skewed to polar residues. 2 disordered regions span residues 444–466 (QQQD…DRHD) and 472–491 (ELGH…KQCI). Residues 472–482 (ELGHCKEQDKG) show a composition bias toward basic and acidic residues.

Poly-ADP-ribosylated (PARsylated) by tankyrase TNKS during late G2 and prophase, leading to translocation to mitotic centrosomes. Post-translationally, N-glycosylated.

It localises to the golgi apparatus membrane. The protein localises to the cytoplasm. Its subcellular location is the cytoskeleton. It is found in the spindle. The protein resides in the microtubule organizing center. It localises to the centrosome. The protein localises to the midbody. Functionally, required during prometaphase for centrosome maturation. Following poly-ADP-ribosylation (PARsylation) by TNKS, translocates from the Golgi apparatus to mitotic centrosomes and plays a key role in the formation of robust microtubules for prompt movement of chromosomes: anchors AKAP9/CG-NAP, a scaffold protein of the gamma-tubulin ring complex and promotes centrosome maturation. The polypeptide is HEPACAM family member 2 (HEPACAM2) (Bos taurus (Bovine)).